Here is a 217-residue protein sequence, read N- to C-terminus: UPF0502 protein Sfri_1696 (217 aa).

This sequence belongs to the UPF0502 family.

This is UPF0502 protein Sfri_1696 from Shewanella frigidimarina (strain NCIMB 400).